The following is a 475-amino-acid chain: F-box protein At3g59150 (475 aa).

The F-box domain occupies 12–58 (GDVISNLPNDLLCRILSYLSTKEAALTSILSKRWSNLLLSIPILDFD).

This is F-box protein At3g59150 from Arabidopsis thaliana (Mouse-ear cress).